The following is a 155-amino-acid chain: MKIYEGKLISKNLKFGIVAGRFNEFIVSKLLSGAVDALKRHGCDEDSIELAWAPGAFEIPLISQKMAESGKYDAVICLGAVIRGATSHFDYVSSEVSKGIAQTSLKTGCPVIFGVLTTDNIEQAIERAGTKSGNKGFDAAVTAIEMANLIKTIGE.

Residues Phe22, 56–58, and 80–82 each bind 5-amino-6-(D-ribitylamino)uracil; these read AFE and AVI. (2S)-2-hydroxy-3-oxobutyl phosphate is bound at residue 85-86; sequence AT. The Proton donor role is filled by His88. Residue Phe113 participates in 5-amino-6-(D-ribitylamino)uracil binding. A (2S)-2-hydroxy-3-oxobutyl phosphate-binding site is contributed by Arg127.

This sequence belongs to the DMRL synthase family.

The catalysed reaction is (2S)-2-hydroxy-3-oxobutyl phosphate + 5-amino-6-(D-ribitylamino)uracil = 6,7-dimethyl-8-(1-D-ribityl)lumazine + phosphate + 2 H2O + H(+). The protein operates within cofactor biosynthesis; riboflavin biosynthesis; riboflavin from 2-hydroxy-3-oxobutyl phosphate and 5-amino-6-(D-ribitylamino)uracil: step 1/2. Catalyzes the formation of 6,7-dimethyl-8-ribityllumazine by condensation of 5-amino-6-(D-ribitylamino)uracil with 3,4-dihydroxy-2-butanone 4-phosphate. This is the penultimate step in the biosynthesis of riboflavin. The polypeptide is 6,7-dimethyl-8-ribityllumazine synthase (Clostridium acetobutylicum (strain ATCC 824 / DSM 792 / JCM 1419 / IAM 19013 / LMG 5710 / NBRC 13948 / NRRL B-527 / VKM B-1787 / 2291 / W)).